Here is a 59-residue protein sequence, read N- to C-terminus: Ferredoxin-2 (59 aa).

4Fe-4S ferredoxin-type domains are found at residues 3–32 (YSVI…LQNG) and 33–59 (KAVP…AIVE). Residues Cys-12, Cys-15, Cys-18, Cys-22, Cys-42, Cys-45, Cys-48, and Cys-52 each coordinate [4Fe-4S] cluster.

Homodimer. [4Fe-4S] cluster serves as cofactor.

The protein localises to the periplasm. In terms of biological role, ferredoxins are iron-sulfur proteins that transfer electrons in a wide variety of metabolic reactions. This Desulfomicrobium norvegicum (strain DSM 1741 / NCIMB 8310) (Desulfovibrio baculatus (strain Norway 4)) protein is Ferredoxin-2.